A 104-amino-acid chain; its full sequence is Colipase-like protein 2 (104 aa).

The signal sequence occupies residues 1 to 19; that stretch reads MAFTQALVTVLAFLVGTLP. Cystine bridges form between Cys38–Cys49, Cys44–Cys60, Cys48–Cys82, Cys70–Cys90, and Cys84–Cys101.

Belongs to the colipase family.

The protein localises to the secreted. This is Colipase-like protein 2 (Clpsl2) from Rattus norvegicus (Rat).